A 418-amino-acid polypeptide reads, in one-letter code: MADTPALIPQSDTTPRCWALIPCAGTGSRAGATGPKQYQLLAGKPMVLHTLAAFAAVPRIARTLVVVAPDDAFFASQTLTDARFLVAACGGSTRAASVLNGLNFLLGQGAARHDWVLVHDAARCLIRPDQIDQLIDACWQDDVGGLLALPLPDTLKRESLGRVAATLERADKWLAQTPQMFRLGSLLDALQVAGTTVTDESSAMEAMGLSPKLVPGSAQNFKVTYPQDFCLAEAVLMTRSSGDSAPQQSASEFKRASDMNFRIGEGWDIHALVAGRKLLLGGVEIPYHLGLLGHSDADVLLHAITDALLGAAALGDIGTHFPDTDARFKGADSLVLLTEAARRVRAKGFEIGNVDSTVIAQAPKLMPYMAAMRAQIALALALEVDQVNVKAKTAEKMGPVGLGQAMEARATVLLRKFI.

The interval 1–261 (MADTPALIPQ…EFKRASDMNF (261 aa)) is 2-C-methyl-D-erythritol 4-phosphate cytidylyltransferase. Positions 262 to 418 (RIGEGWDIHA…RATVLLRKFI (157 aa)) are 2-C-methyl-D-erythritol 2,4-cyclodiphosphate synthase. A divalent metal cation-binding residues include aspartate 268 and histidine 270. Residues 268-270 (DIH) and 294-295 (HS) contribute to the 4-CDP-2-C-methyl-D-erythritol 2-phosphate site. Position 302 (histidine 302) interacts with a divalent metal cation. 4-CDP-2-C-methyl-D-erythritol 2-phosphate is bound by residues 316-318 (DIG) and 321-325 (FPDTD).

In the N-terminal section; belongs to the IspD/TarI cytidylyltransferase family. IspD subfamily. This sequence in the C-terminal section; belongs to the IspF family. The cofactor is a divalent metal cation.

The enzyme catalyses 2-C-methyl-D-erythritol 4-phosphate + CTP + H(+) = 4-CDP-2-C-methyl-D-erythritol + diphosphate. The catalysed reaction is 4-CDP-2-C-methyl-D-erythritol 2-phosphate = 2-C-methyl-D-erythritol 2,4-cyclic diphosphate + CMP. It participates in isoprenoid biosynthesis; isopentenyl diphosphate biosynthesis via DXP pathway; isopentenyl diphosphate from 1-deoxy-D-xylulose 5-phosphate: step 2/6. Its pathway is isoprenoid biosynthesis; isopentenyl diphosphate biosynthesis via DXP pathway; isopentenyl diphosphate from 1-deoxy-D-xylulose 5-phosphate: step 4/6. Functionally, bifunctional enzyme that catalyzes the formation of 4-diphosphocytidyl-2-C-methyl-D-erythritol from CTP and 2-C-methyl-D-erythritol 4-phosphate (MEP) (IspD), and catalyzes the conversion of 4-diphosphocytidyl-2-C-methyl-D-erythritol 2-phosphate (CDP-ME2P) to 2-C-methyl-D-erythritol 2,4-cyclodiphosphate (ME-CPP) with a corresponding release of cytidine 5-monophosphate (CMP) (IspF). This Albidiferax ferrireducens (strain ATCC BAA-621 / DSM 15236 / T118) (Rhodoferax ferrireducens) protein is Bifunctional enzyme IspD/IspF.